A 271-amino-acid chain; its full sequence is 3-methyl-2-oxobutanoate hydroxymethyltransferase (271 aa).

Mg(2+) contacts are provided by aspartate 49 and aspartate 88. 3-methyl-2-oxobutanoate contacts are provided by residues 49–50 (DS), aspartate 88, and lysine 118. Glutamate 120 lines the Mg(2+) pocket. Glutamate 187 functions as the Proton acceptor in the catalytic mechanism.

This sequence belongs to the PanB family. Homodecamer; pentamer of dimers. Mg(2+) is required as a cofactor.

It localises to the cytoplasm. The enzyme catalyses 3-methyl-2-oxobutanoate + (6R)-5,10-methylene-5,6,7,8-tetrahydrofolate + H2O = 2-dehydropantoate + (6S)-5,6,7,8-tetrahydrofolate. It participates in cofactor biosynthesis; (R)-pantothenate biosynthesis; (R)-pantoate from 3-methyl-2-oxobutanoate: step 1/2. In terms of biological role, catalyzes the reversible reaction in which hydroxymethyl group from 5,10-methylenetetrahydrofolate is transferred onto alpha-ketoisovalerate to form ketopantoate. The protein is 3-methyl-2-oxobutanoate hydroxymethyltransferase of Bartonella bacilliformis (strain ATCC 35685 / KC583 / Herrer 020/F12,63).